Reading from the N-terminus, the 478-residue chain is Bifunctional protein HldE (478 aa).

The ribokinase stretch occupies residues Met-1–Ser-318. ATP is bound at residue Asn-195 to Glu-198. Asp-264 is an active-site residue. The cytidylyltransferase stretch occupies residues Met-344–Asn-478.

The protein in the N-terminal section; belongs to the carbohydrate kinase PfkB family. In the C-terminal section; belongs to the cytidylyltransferase family. Homodimer.

The catalysed reaction is D-glycero-beta-D-manno-heptose 7-phosphate + ATP = D-glycero-beta-D-manno-heptose 1,7-bisphosphate + ADP + H(+). It catalyses the reaction D-glycero-beta-D-manno-heptose 1-phosphate + ATP + H(+) = ADP-D-glycero-beta-D-manno-heptose + diphosphate. It participates in nucleotide-sugar biosynthesis; ADP-L-glycero-beta-D-manno-heptose biosynthesis; ADP-L-glycero-beta-D-manno-heptose from D-glycero-beta-D-manno-heptose 7-phosphate: step 1/4. The protein operates within nucleotide-sugar biosynthesis; ADP-L-glycero-beta-D-manno-heptose biosynthesis; ADP-L-glycero-beta-D-manno-heptose from D-glycero-beta-D-manno-heptose 7-phosphate: step 3/4. In terms of biological role, catalyzes the phosphorylation of D-glycero-D-manno-heptose 7-phosphate at the C-1 position to selectively form D-glycero-beta-D-manno-heptose-1,7-bisphosphate. Catalyzes the ADP transfer from ATP to D-glycero-beta-D-manno-heptose 1-phosphate, yielding ADP-D-glycero-beta-D-manno-heptose. In Erwinia tasmaniensis (strain DSM 17950 / CFBP 7177 / CIP 109463 / NCPPB 4357 / Et1/99), this protein is Bifunctional protein HldE.